The following is a 306-amino-acid chain: Ribosomal protein L11 methyltransferase (306 aa).

T154, G179, D201, and N242 together coordinate S-adenosyl-L-methionine.

The protein belongs to the methyltransferase superfamily. PrmA family.

It is found in the cytoplasm. The enzyme catalyses L-lysyl-[protein] + 3 S-adenosyl-L-methionine = N(6),N(6),N(6)-trimethyl-L-lysyl-[protein] + 3 S-adenosyl-L-homocysteine + 3 H(+). Methylates ribosomal protein L11. The sequence is that of Ribosomal protein L11 methyltransferase from Xylella fastidiosa (strain 9a5c).